The chain runs to 613 residues: Phostensin (613 aa).

The segment covering 18 to 33 (EEASVRGREKAERERL) has biased composition (basic and acidic residues). Disordered stretches follow at residues 18–231 (EEAS…SAYQ) and 266–500 (GEER…AVPG). Phosphoserine is present on residues serine 54, serine 125, serine 133, serine 175, and serine 195. 2 stretches are compositionally biased toward basic and acidic residues: residues 104–154 (RSEE…ERRL) and 167–191 (LEAR…EAWK). The residue at position 199 (threonine 199) is a Phosphothreonine. Residues 199-221 (TPERSLRLAESREQSPRRKEVES) are compositionally biased toward basic and acidic residues. Serine 224 carries the post-translational modification Phosphoserine. The segment covering 266–282 (GEERQDYSEECGRKEEW) has biased composition (basic and acidic residues). Over residues 295–309 (LSETLTREAQGNSSA) the composition is skewed to polar residues. Composition is skewed to basic and acidic residues over residues 314–327 (AEQR…RGMK), 340–350 (KAREWTPRDIE), and 357–366 (EPPESAEKLL). Phosphoserine occurs at positions 368 and 432. Positions 424–446 (QPPPPAPLSPPPPAPTAPQPPGD) are enriched in pro residues. Residue lysine 457 is modified to N6-acetyllysine. A compositionally biased stretch (low complexity) spans 476-499 (PRRSVPPATPATPTSPATVDAAVP). Residues serine 490 and serine 530 each carry the phosphoserine modification. The interval 552-595 (QYPSESSVLEELGPEPEVPSAPNPPAAQPDDEEDEEELLLLQPE) is disordered. The span at 567–578 (PEVPSAPNPPAA) shows a compositional bias: pro residues. A compositionally biased stretch (acidic residues) spans 580 to 589 (PDDEEDEEEL).

Interacts with Protein phosphatase 1 (PP1). In terms of tissue distribution, isoform 4 is predominantly expressed in leukocytes and spleen.

The protein resides in the cytoplasm. Its subcellular location is the cytoskeleton. In terms of biological role, may target protein phosphatase 1 to F-actin cytoskeleton. The polypeptide is Phostensin (PPP1R18) (Homo sapiens (Human)).